The chain runs to 473 residues: Ribulose bisphosphate carboxylase large chain (473 aa).

Substrate contacts are provided by Asn116 and Thr166. Lys168 serves as the catalytic Proton acceptor. Position 170 (Lys170) interacts with substrate. Positions 194, 196, and 197 each coordinate Mg(2+). Lys194 bears the N6-carboxylysine mark. Catalysis depends on His287, which acts as the Proton acceptor. Substrate contacts are provided by Arg288, His320, and Ser372.

This sequence belongs to the RuBisCO large chain family. Type I subfamily. In terms of assembly, heterohexadecamer of 8 large chains and 8 small chains. The cofactor is Mg(2+).

It catalyses the reaction 2 (2R)-3-phosphoglycerate + 2 H(+) = D-ribulose 1,5-bisphosphate + CO2 + H2O. The catalysed reaction is D-ribulose 1,5-bisphosphate + O2 = 2-phosphoglycolate + (2R)-3-phosphoglycerate + 2 H(+). Functionally, ruBisCO catalyzes two reactions: the carboxylation of D-ribulose 1,5-bisphosphate, the primary event in carbon dioxide fixation, as well as the oxidative fragmentation of the pentose substrate. Both reactions occur simultaneously and in competition at the same active site. This Nitrosospira sp. (strain TCH716) protein is Ribulose bisphosphate carboxylase large chain.